Here is a 590-residue protein sequence, read N- to C-terminus: Cytidine monophosphate-N-acetylneuraminic acid hydroxylase (590 aa).

Residues 14–112 enclose the Rieske domain; it reads LSPVEVANLK…VEMDENNGLL (99 aa). [2Fe-2S] cluster-binding residues include C54, H56, C75, and H78.

Belongs to the CMP-Neu5Ac hydroxylase family. [2Fe-2S] cluster is required as a cofactor.

The protein resides in the cytoplasm. It carries out the reaction CMP-N-acetyl-beta-neuraminate + 2 Fe(II)-[cytochrome b5] + O2 + 2 H(+) = CMP-N-glycoloyl-beta-neuraminate + 2 Fe(III)-[cytochrome b5] + H2O. The protein operates within amino-sugar metabolism; N-acetylneuraminate metabolism. Sialic acids are components of carbohydrate chains of glycoconjugates and are involved in cell-cell recognition and cell-pathogen interactions. Catalyzes the conversion of CMP-N-acetylneuraminic acid (CMP-Neu5Ac) into its hydroxylated derivative CMP-N-glycolylneuraminic acid (CMP-Neu5Gc), a sialic acid abundantly expressed at the surface of many cells. The chain is Cytidine monophosphate-N-acetylneuraminic acid hydroxylase (CMAH) from Macaca mulatta (Rhesus macaque).